The primary structure comprises 614 residues: Vitamin B12 transporter BtuB (614 aa).

The N-terminal stretch at 1-20 (MIKKASLLTACSVTAFSAWA) is a signal peptide. Residues 26–33 (DTLVVTAN) carry the TonB box motif. The TBDR plug domain occupies 38 to 152 (PRSTVLAPTT…IGGVVNIITT (115 aa)). Cyanocob(III)alamin contacts are provided by residues leucine 83, serine 85, asparagine 92, and 110–111 (VS). In terms of domain architecture, TBDR beta-barrel spans 155–614 (EPGTEISAGW…EYTLSGSYTF (460 aa)). The next 3 beta stranded transmembrane spans lie at 158 to 165 (TEISAGWG), 169 to 178 (YQNYDVSTQQ), and 184 to 195 (TRVTLLGDYAHT). Residues aspartate 199, glutamine 211, aspartate 213, and aspartate 215 each coordinate Ca(2+). A run of 2 beta stranded transmembrane segments spans residues 217–227 (FLSKTLYGALE) and 232–248 (DAWS…NRTN). 2 residues coordinate Ca(2+): tyrosine 249 and aspartate 250. Alanine 251 contributes to the cyanocob(III)alamin binding site. Aspartate 261 contributes to the Ca(2+) binding site. A run of 14 beta stranded transmembrane segments spans residues 263–277 (RKLY…LRYN), 279–296 (ELIK…KDYN), 309–325 (TLDE…NNII), 328–337 (HGNVGAGVDW), 353–369 (YDQR…QQVG), 371–381 (FTFEGAARSDD), 385–400 (FGRH…WEFI), 403–417 (YRFI…KAPN), 434–443 (KSKQWEGAFE), 449–458 (VNWRISGYRN), 473–490 (YYNE…TANF), 494–509 (PLTH…ARNA), 517–529 (RRAK…QLDW), and 535–550 (DWGI…YDKD). Residue threonine 309 coordinates cyanocob(III)alamin. Cyanocob(III)alamin is bound at residue arginine 517. Tyrosine 551 is a binding site for cyanocob(III)alamin. The next 3 membrane-spanning stretches (beta stranded) occupy residues 558–572 (TVKM…LAVA), 585–596 (IANLFDKDYETV), and 602–614 (AGRE…SYTF). A TonB C-terminal box motif is present at residues 597-614 (YGYQTAGREYTLSGSYTF).

The protein belongs to the TonB-dependent receptor family. BtuB (TC 1.B.14.3.1) subfamily.

It localises to the cell outer membrane. Involved in the active translocation of vitamin B12 (cyanocobalamin) across the outer membrane to the periplasmic space. It derives its energy for transport by interacting with the trans-periplasmic membrane protein TonB. This is Vitamin B12 transporter BtuB from Shigella dysenteriae serotype 1 (strain Sd197).